A 340-amino-acid polypeptide reads, in one-letter code: Glycerol-3-phosphate dehydrogenase [NAD(P)+] (340 aa).

S14, F15, R35, and K108 together coordinate NADPH. Residues K108 and G136 each coordinate sn-glycerol 3-phosphate. NADPH is bound at residue A140. Residues K191, D244, S254, R255, and N256 each coordinate sn-glycerol 3-phosphate. K191 functions as the Proton acceptor in the catalytic mechanism. NADPH is bound at residue R255. 2 residues coordinate NADPH: V279 and E281.

This sequence belongs to the NAD-dependent glycerol-3-phosphate dehydrogenase family.

Its subcellular location is the cytoplasm. It carries out the reaction sn-glycerol 3-phosphate + NAD(+) = dihydroxyacetone phosphate + NADH + H(+). The catalysed reaction is sn-glycerol 3-phosphate + NADP(+) = dihydroxyacetone phosphate + NADPH + H(+). It functions in the pathway membrane lipid metabolism; glycerophospholipid metabolism. In terms of biological role, catalyzes the reduction of the glycolytic intermediate dihydroxyacetone phosphate (DHAP) to sn-glycerol 3-phosphate (G3P), the key precursor for phospholipid synthesis. This Azotobacter vinelandii (strain DJ / ATCC BAA-1303) protein is Glycerol-3-phosphate dehydrogenase [NAD(P)+].